Consider the following 199-residue polypeptide: Cutinase CUT1 (199 aa).

Positions 1–18 (MKFTTLATLALGAVSALA) are cleaved as a signal peptide. The propeptide occupies 19–27 (APVTELESR). Position 28 is a pyrrolidone carboxylic acid (Q28). An intrachain disulfide couples C31 to C105. Residue S116 is the Nucleophile of the active site. An intrachain disulfide couples C164 to C171. D168 is a catalytic residue. H181 serves as the catalytic Proton donor/acceptor.

Belongs to the cutinase family. The 2 disulfide bonds play a critical role in holding the catalytic residues in juxta-position; reduction of the disulfide bridges results in the complete inactivation of the enzyme.

It carries out the reaction cutin + H2O = cutin monomers.. Its function is as follows. Catalyzes the hydrolysis of complex carboxylic polyesters found in the cell wall of plants. Degrades cutin, a macromolecule that forms the structure of the plant cuticle. Also degrades suberin, a specialized macromolecule found in the cell wall of various plant tissues. This chain is Cutinase CUT1, found in Coprinopsis cinerea (Inky cap fungus).